Consider the following 299-residue polypeptide: MRKSEFNAKSCFLMIGICVFNLNSSSCIIKTNAEHCSKRLFSFCYLGVGVIKKPLHLGNRKNMLFLSFLLVCLCEEVQMLNLTTTEVSATEFASIASKNMETNVSTSSDYLTGKSETTFSANPETWGKNVTEISIASVAYLNQSSMVTSTLAVGTTNRSSGNNVNVTTSSFPTVKGDEAQDIETFFTVILASTLSDVSEKTPQGLPTKSTPKKTVQALWETDTVQVPELTDTNEGDEEYFKDFLSSLVIWICGISFVGAFIIVIVILYNWYKKDKQRSLLWDEENKPDVQIRRDAKTCR.

The first 27 residues, 1 to 27 (MRKSEFNAKSCFLMIGICVFNLNSSSC), serve as a signal peptide directing secretion. Residues 247-267 (LVIWICGISFVGAFIIVIVIL) traverse the membrane as a helical segment.

The protein localises to the host membrane. The chain is Protein U23 (U23) from Human herpesvirus 6B (strain Z29) (HHV-6 variant B).